Here is a 78-residue protein sequence, read N- to C-terminus: Delta-conotoxin-like CVIE (78 aa).

A signal peptide spans 1-22; the sequence is MKLTCMMIVAVLFLTAWTFVTA. Positions 23–49 are excised as a propeptide; sequence DDSRNGLKNLFPKARHEMKNPEASKLN. 3 cysteine pairs are disulfide-bonded: cysteine 54/cysteine 69, cysteine 61/cysteine 73, and cysteine 68/cysteine 77. At proline 65 the chain carries 4-hydroxyproline.

Belongs to the conotoxin O1 superfamily. As to expression, expressed by the venom duct.

It is found in the secreted. Its function is as follows. Delta-conotoxins bind to site 6 of voltage-gated sodium channels (Nav) and inhibit the inactivation process. The chain is Delta-conotoxin-like CVIE from Conus catus (Cat cone).